Reading from the N-terminus, the 303-residue chain is ATP phosphoribosyltransferase (303 aa).

It belongs to the ATP phosphoribosyltransferase family. Long subfamily. Mg(2+) serves as cofactor.

It localises to the cytoplasm. It carries out the reaction 1-(5-phospho-beta-D-ribosyl)-ATP + diphosphate = 5-phospho-alpha-D-ribose 1-diphosphate + ATP. Its pathway is amino-acid biosynthesis; L-histidine biosynthesis; L-histidine from 5-phospho-alpha-D-ribose 1-diphosphate: step 1/9. With respect to regulation, feedback inhibited by histidine. Its function is as follows. Catalyzes the condensation of ATP and 5-phosphoribose 1-diphosphate to form N'-(5'-phosphoribosyl)-ATP (PR-ATP). Has a crucial role in the pathway because the rate of histidine biosynthesis seems to be controlled primarily by regulation of HisG enzymatic activity. This chain is ATP phosphoribosyltransferase, found in Haemophilus influenzae (strain 86-028NP).